The primary structure comprises 478 residues: Cytochrome c-552 (478 aa).

A signal peptide spans 1–26 (MARKTLRARRFFSLIFPFFFITSVYA). Residue His94 coordinates heme c. Residues Cys122, Cys125, and Lys126 each coordinate heme. Heme c-binding residues include Cys160, Cys163, His164, Cys209, Cys212, and His213. Residues Glu215, Tyr216, Lys261, and Gln263 each contribute to the Ca(2+) site. Residue Tyr216 coordinates substrate. His264 lines the substrate pocket. Residues His275, Cys282, Cys285, His286, His301, Cys314, Cys317, His318, and His393 each coordinate heme c.

This sequence belongs to the cytochrome c-552 family. Requires Ca(2+) as cofactor. The cofactor is heme c.

It is found in the periplasm. It carries out the reaction 6 Fe(III)-[cytochrome c] + NH4(+) + 2 H2O = 6 Fe(II)-[cytochrome c] + nitrite + 8 H(+). It functions in the pathway nitrogen metabolism; nitrate reduction (assimilation). Its function is as follows. Catalyzes the reduction of nitrite to ammonia, consuming six electrons in the process. The protein is Cytochrome c-552 of Salmonella dublin (strain CT_02021853).